The chain runs to 159 residues: Ribosomal RNA large subunit methyltransferase H (159 aa).

S-adenosyl-L-methionine-binding positions include Leu-76, Gly-108, and 127-132 (FGLLTL).

The protein belongs to the RNA methyltransferase RlmH family. In terms of assembly, homodimer.

It is found in the cytoplasm. The enzyme catalyses pseudouridine(1915) in 23S rRNA + S-adenosyl-L-methionine = N(3)-methylpseudouridine(1915) in 23S rRNA + S-adenosyl-L-homocysteine + H(+). Its function is as follows. Specifically methylates the pseudouridine at position 1915 (m3Psi1915) in 23S rRNA. This is Ribosomal RNA large subunit methyltransferase H from Streptococcus mutans serotype c (strain ATCC 700610 / UA159).